The primary structure comprises 134 residues: Profilin-1 (134 aa).

A disulfide bond links C13 and C118. An Involved in PIP2 interaction motif is present at residues 84–100; that stretch reads AVIRGKKGSGGITIKKT. T114 is modified (phosphothreonine).

Belongs to the profilin family. As to quaternary structure, occurs in many kinds of cells as a complex with monomeric actin in a 1:1 ratio. Phosphorylated by MAP kinases.

It is found in the cytoplasm. The protein localises to the cytoskeleton. In terms of biological role, binds to actin and affects the structure of the cytoskeleton. At high concentrations, profilin prevents the polymerization of actin, whereas it enhances it at low concentrations. In Olea europaea (Common olive), this protein is Profilin-1.